Consider the following 317-residue polypeptide: Apolipoprotein E (317 aa).

The signal sequence occupies residues 1–18; the sequence is MKVLWAALLVTFLAGCQA. 8 tandem repeats follow at residues 80 to 101, 102 to 123, 124 to 145, 146 to 167, 168 to 189, 190 to 211, 212 to 233, and 234 to 255. An 8 X 22 AA approximate tandem repeats region spans residues 80–255; it reads ALMDETMKEL…RLDEVKEQVA (176 aa). M143 carries the methionine sulfoxide modification. S147 is modified (phosphoserine). Residues 158–168 are LDL and other lipoprotein receptors binding; the sequence is HLRKLRKRLLR. 162 to 165 contributes to the heparin binding site; that stretch reads LRKR. The lipid-binding and lipoprotein association stretch occupies residues 210 to 290; sequence AATVGSLAGQ…SWFEPLVEDM (81 aa). 229-236 contacts heparin; that stretch reads GERLRARM. The homooligomerization stretch occupies residues 266 to 317; the sequence is QQIRLQAEAFQARLKSWFEPLVEDMQRQWAGLVEKVQAAMGTSAAPVPSDNH. Residues 278-290 are specificity for association with VLDL; that stretch reads RLKSWFEPLVEDM.

This sequence belongs to the apolipoprotein A1/A4/E family. In terms of assembly, homotetramer. May interact with ABCA1; functionally associated with ABCA1 in the biogenesis of HDLs. May interact with APP/A4 amyloid-beta peptide; the interaction is extremely stable in vitro but its physiological significance is unclear. May interact with MAPT. May interact with MAP2. In the cerebrospinal fluid, interacts with secreted SORL1. Interacts with PMEL; this allows the loading of PMEL luminal fragment on ILVs to induce fibril nucleation. Post-translationally, APOE exists as multiple glycosylated and sialylated glycoforms within cells and in plasma. The extent of glycosylation and sialylation are tissue and context specific. Glycated in plasma VLDL. In terms of processing, phosphorylated by FAM20C in the extracellular medium.

Its subcellular location is the secreted. It is found in the extracellular space. It localises to the extracellular matrix. The protein resides in the extracellular vesicle. The protein localises to the endosome. Its subcellular location is the multivesicular body. Its function is as follows. APOE is an apolipoprotein, a protein associating with lipid particles, that mainly functions in lipoprotein-mediated lipid transport between organs via the plasma and interstitial fluids. APOE is a core component of plasma lipoproteins and is involved in their production, conversion and clearance. Apolipoproteins are amphipathic molecules that interact both with lipids of the lipoprotein particle core and the aqueous environment of the plasma. As such, APOE associates with chylomicrons, chylomicron remnants, very low density lipoproteins (VLDL) and intermediate density lipoproteins (IDL) but shows a preferential binding to high-density lipoproteins (HDL). It also binds a wide range of cellular receptors including the LDL receptor/LDLR, the LDL receptor-related proteins LRP1, LRP2 and LRP8 and the very low-density lipoprotein receptor/VLDLR that mediate the cellular uptake of the APOE-containing lipoprotein particles. Finally, APOE also has a heparin-binding activity and binds heparan-sulfate proteoglycans on the surface of cells, a property that supports the capture and the receptor-mediated uptake of APOE-containing lipoproteins by cells. A main function of APOE is to mediate lipoprotein clearance through the uptake of chylomicrons, VLDLs, and HDLs by hepatocytes. APOE is also involved in the biosynthesis by the liver of VLDLs as well as their uptake by peripheral tissues ensuring the delivery of triglycerides and energy storage in muscle, heart and adipose tissues. By participating in the lipoprotein-mediated distribution of lipids among tissues, APOE plays a critical role in plasma and tissues lipid homeostasis. APOE is also involved in two steps of reverse cholesterol transport, the HDLs-mediated transport of cholesterol from peripheral tissues to the liver, and thereby plays an important role in cholesterol homeostasis. First, it is functionally associated with ABCA1 in the biogenesis of HDLs in tissues. Second, it is enriched in circulating HDLs and mediates their uptake by hepatocytes. APOE also plays an important role in lipid transport in the central nervous system, regulating neuron survival and sprouting. This Pan troglodytes (Chimpanzee) protein is Apolipoprotein E (APOE).